The primary structure comprises 115 residues: Parathyroid hormone (115 aa).

The signal sequence occupies residues 1-25; the sequence is MMSAKNMVKVMIVMFAIFLLAKSDG. A propeptide spanning residues 26–31 is cleaved from the precursor; it reads KPVRKR. The segment at 51–69 is important for receptor binding; it reads RVEWLRKKLQDVHNFIALG. The interval 73–115 is disordered; that stretch reads FHRDGGSQRPRKKEDNVLIESHQKSLGEADKADVDVLSKTKSQ.

This sequence belongs to the parathyroid hormone family. As to quaternary structure, interacts with PTH1R (via N-terminal extracellular domain).

It localises to the secreted. Functionally, parathyroid hormone elevates calcium level by dissolving the salts in bone and preventing their renal excretion. Acts by binding to its receptor, PTH1R, activating G protein-coupled receptor signaling. Stimulates [1-14C]-2-deoxy-D-glucose (2DG) transport and glycogen synthesis in osteoblastic cells. In Equus caballus (Horse), this protein is Parathyroid hormone (PTH).